A 482-amino-acid chain; its full sequence is MKQSILFERVSARLKAQVGPDVYASWFARLKLHSVSKSVVRLSVPTTFLKSWINNRYLDLITGLFQAEDPEILKIEVLVRTATRHGTKALDEVVAPEPAAPTQMRRPTSAQPAGQAVQQAVSAVAAARPASFGSPLFGSPLDSRFTFDTFVEGSSNRVALAAAKTIAEAGQGAVRFNPLFIHSTVGLGKTHLLQAVANAAVQNPRSLRVVYLTAEYFMWRFATAIRDNDALTLKDSLRNIDLLIIDDMQFLQGKMIQHEFCHLLNMLLDSAKQVVVAADRAPWELESLDPRVRSRLQGGVAIEFDAPDYEMRLEILKRRLAVARLEDPSLEIPAELLQHVARNVTASGRELEGAFNQLVFRRSFEPNLSIERVDELLAHLVGSGEPRRVRIEDIQRIVARHYNVSRQELVSNRRTRVIVKPRQIAMYLSKTLTPRSFPEIGRRFGGRDHTTVLHAVRKIEELISGDTKLSHEVELLKRLINE.

The interval 1-71 is domain I, interacts with DnaA modulators; that stretch reads MKQSILFERV…TGLFQAEDPE (71 aa). The segment at 71 to 139 is domain II; that stretch reads EILKIEVLVR…ASFGSPLFGS (69 aa). The interval 140–362 is domain III, AAA+ region; sequence PLDSRFTFDT…GAFNQLVFRR (223 aa). Residues glycine 186, glycine 188, lysine 189, and threonine 190 each coordinate ATP. The domain IV, binds dsDNA stretch occupies residues 363-482; sequence SFEPNLSIER…VELLKRLINE (120 aa).

This sequence belongs to the DnaA family. In terms of assembly, oligomerizes as a right-handed, spiral filament on DNA at oriC.

It is found in the cytoplasm. Functionally, plays an essential role in the initiation and regulation of chromosomal replication. ATP-DnaA binds to the origin of replication (oriC) to initiate formation of the DNA replication initiation complex once per cell cycle. Binds the DnaA box (a 9 base pair repeat at the origin) and separates the double-stranded (ds)DNA. Forms a right-handed helical filament on oriC DNA; dsDNA binds to the exterior of the filament while single-stranded (ss)DNA is stabiized in the filament's interior. The ATP-DnaA-oriC complex binds and stabilizes one strand of the AT-rich DNA unwinding element (DUE), permitting loading of DNA polymerase. After initiation quickly degrades to an ADP-DnaA complex that is not apt for DNA replication. Binds acidic phospholipids. This is Chromosomal replication initiator protein DnaA from Rhizobium johnstonii (strain DSM 114642 / LMG 32736 / 3841) (Rhizobium leguminosarum bv. viciae).